Reading from the N-terminus, the 302-residue chain is Short-chain dehydrogenase/reductase 3 (302 aa).

The next 4 membrane-spanning stretches (helical) occupy residues 9-29, 170-190, 195-215, and 253-273; these read LVVFPLQMIYLVVKAAVGLVL, IVCLNSVLALSAIPGAIDYCT, AFAFMESLTLGLLDCPGVSAT, and AVQLNQALLLLPWTMHALIIL. Substrate is bound at residue S175. Y188 serves as the catalytic Proton acceptor.

This sequence belongs to the short-chain dehydrogenases/reductases (SDR) family. As to expression, in the retina, expressed in cone but not rod outer segments.

Its subcellular location is the membrane. The enzyme catalyses all-trans-retinol + NADP(+) = all-trans-retinal + NADPH + H(+). Functionally, catalyzes the reduction of all-trans-retinal to all-trans-retinol in the presence of NADPH. The polypeptide is Short-chain dehydrogenase/reductase 3 (DHRS3) (Bos taurus (Bovine)).